The primary structure comprises 376 residues: Neuropeptide receptor 3 (376 aa).

At 1–29 (MEGGRNCVMTVQQWQPEYNDMNQIRAIFS) the chain is on the extracellular side. Residues 30–50 (LLYLLVWVGAIVGNTLVLYVL) form a helical membrane-spanning segment. Residues 51–66 (TFNQVSLSVRTVFVGC) lie on the Cytoplasmic side of the membrane. A helical transmembrane segment spans residues 67–87 (LAGSDLLMCLFSLPITAISIF). Over 88–89 (SR) the chain is Extracellular. Residues 90–110 (VWVFPAIFCKLIGVFQGGTIF) traverse the membrane as a helical segment. A disulfide bond links Cys98 and Cys175. At 111–139 (VSSFTLTVIALDRCVLILRPNQEIVNFPR) the chain is on the cytoplasmic side. The helical transmembrane segment at 140-160 (AVFIVFCIWLLGYSLALPVGI) threads the bilayer. The Extracellular segment spans residues 161 to 197 (YSDIAVYDEICGTFCEENWPDFNPDTGRSGIRRAYGL). A helical membrane pass occupies residues 198–218 (SVLVLQFGIPALISSICYWMI). The Cytoplasmic segment spans residues 219 to 251 (SRVMSDQLARRRGHNIRPESETKLVNRKTRANR). The helical transmembrane segment at 252 to 272 (MMIVMVVGFVLAWMPFNAVNL) threads the bilayer. The Extracellular segment spans residues 273 to 284 (YRDLFGISKWYS). The helical transmembrane segment at 285–305 (TVFALCHVCAMCSAVLNPIIY) threads the bilayer. At 306–376 (SWFNPQFRQS…NDYRAGDQLL (71 aa)) the chain is on the cytoplasmic side.

Belongs to the G-protein coupled receptor 1 family.

The protein localises to the cell membrane. In terms of biological role, G-protein coupled receptor for flp-15 neuropeptides. Receptor activation assays suggest binding to predicted flp-15 peptides, GGPQGPLRF-NH2 and RGPSGPLRF-NH2. Likely involved in Gi/Go-coupled signaling pathways. This Caenorhabditis elegans protein is Neuropeptide receptor 3.